We begin with the raw amino-acid sequence, 209 residues long: Protein Bel-1 (209 aa).

Disordered stretches follow at residues 1-30 (MASKYPEEGPITEGVEEDFNSHSTSGLDLT), 123-143 (FLNSRKESGTPKTDPTRPATS), and 156-185 (CSRPTPSNSESVCNGLGQPSERGHTSGESG). 2 stretches are compositionally biased toward polar residues: residues 21–30 (SHSTSGLDLT) and 132–143 (TPKTDPTRPATS).

Transcriptional transactivator that activates the viral internal promoter (IP), thereby enhancing its own expression. This transactivation is repressed by nuclear factor I. Also transactivates the long terminal repeat (LTR) promoter, thereby inducing structural gene expression, initiating the late phase of infection. It is therefore a key regulator of viral gene expression. It directly binds to and activates DNA target sites of viral promoters and those of distinct cellular genes. Required for viral replication. The polypeptide is Protein Bel-1 (bel1) (Felis catus (Cat)).